We begin with the raw amino-acid sequence, 146 residues long: Cyanate hydratase (146 aa).

Active-site residues include Arg87, Glu90, and Ser113.

This sequence belongs to the cyanase family.

The catalysed reaction is cyanate + hydrogencarbonate + 3 H(+) = NH4(+) + 2 CO2. Its function is as follows. Catalyzes the reaction of cyanate with bicarbonate to produce ammonia and carbon dioxide. The chain is Cyanate hydratase from Pseudomonas putida (strain ATCC 700007 / DSM 6899 / JCM 31910 / BCRC 17059 / LMG 24140 / F1).